Consider the following 503-residue polypeptide: Probable cytosol aminopeptidase (503 aa).

Residues K270 and D275 each coordinate Mn(2+). K282 is an active-site residue. 3 residues coordinate Mn(2+): D293, D352, and E354. Residue R356 is part of the active site.

This sequence belongs to the peptidase M17 family. Mn(2+) is required as a cofactor.

It is found in the cytoplasm. The enzyme catalyses Release of an N-terminal amino acid, Xaa-|-Yaa-, in which Xaa is preferably Leu, but may be other amino acids including Pro although not Arg or Lys, and Yaa may be Pro. Amino acid amides and methyl esters are also readily hydrolyzed, but rates on arylamides are exceedingly low.. The catalysed reaction is Release of an N-terminal amino acid, preferentially leucine, but not glutamic or aspartic acids.. Presumably involved in the processing and regular turnover of intracellular proteins. Catalyzes the removal of unsubstituted N-terminal amino acids from various peptides. The polypeptide is Probable cytosol aminopeptidase (Shigella boydii serotype 4 (strain Sb227)).